The chain runs to 431 residues: O-Mevalon transferase macI (431 aa).

Asparagine 176 carries N-linked (GlcNAc...) asparagine glycosylation. 4 helical membrane-spanning segments follow: residues 198-218, 301-321, 336-356, and 404-424; these read IYAL…AILM, LLMM…YQVT, YFAL…VLGI, and LFAA…NFVA.

It belongs to the wax synthase family.

It localises to the membrane. Its pathway is secondary metabolite biosynthesis; terpenoid biosynthesis. Its function is as follows. O-Mevalon transferase; part of the gene cluster that mediates the biosynthesis of macrophorins, isoprenoid epoxycyclohexenones containing cyclized drimane moieties. The first step of the pathway is the synthesis of 6-methylsalicylic acid (6-MSA) by the polyketide synthase macA. 6-MSA is then converted to m-cresol by the decarboxylase macB. The cytochrome P450 monooxygenase macC then catalyzes the oxidation of m-cresol to toluquinol. Epoxidation of toluquinol is then performed by the short chain dehydrogenase macD, with the help of macE, and a further prenylation by macG leads to 7-deacetoxyyanuthone A. The next step is the hydroxylation of C-22 of 7-deacetoxyyanuthone A by the cytochrome P450 monooxygenase macH to yield 22-deacetylyanuthone A. O-Mevalon transferase macI then attaches mevalon to the hydroxyl group of 22-deacetylyanuthone A to produce yanuthone E. The terpene cyclase macJ catalyzes the cyclization of 22-deacetylyanuthone A to macrophorin A. MacJ is also able to catalyze cyclization of yanuthone E and 7-deacetoxyyanuthone A to their corresponding macrophorins. The macJ products can be further modified by macH and macJ, as well as by the FAD-dependent monooxygenase macF, to produce additional macrophorins, including 4'-oxomacrophorin A, 4'-oxomacrophorin D and 4'-oxomacrophorin E. The sequence is that of O-Mevalon transferase macI from Penicillium terrestre.